The primary structure comprises 251 residues: Prothoracicostatic peptides (251 aa).

The interval 1–22 is disordered; the sequence is MRKSARGQVCTEAGAGASGDWQ. Positions 1–77 are excised as a propeptide; the sequence is MRKSARGQVC…GWQDLNSAWG (77 aa). A Tryptophan amide modification is found at W89. The propeptide occupies 93-138; it reads GWNDMSSAWGKRGWNDMSSAWGKRGWNDMSSAWGKRGWNDMSSAWG. W152 bears the Tryptophan amide mark. A propeptide spanning residues 156 to 187 is cleaved from the precursor; sequence AAEPDYEEIDAAIEQLIPIQQLSDNERMEVPE. 2 positions are modified to tryptophan amide: W198 and W228. A disordered region spans residues 227-251; that stretch reads MWGKRSAPDADAVDDDHESSARDEA.

In terms of tissue distribution, prothoracicostatic peptide 5: Expressed in antennal lobe (AL), corpora cardiaca (CC), corpora allata (CA) and gnathal ganglion (GNG) (at protein level). Expression in AL detected in all animals, in CC, CA and GNG in most (at protein level). Prothoracicostatic peptide 6: Expressed in antennal lobe (AL), corpora cardiaca (CC), corpora allata (CA) and gnathal ganglion (GNG) (at protein level). Expression in AL detected in all animals, expression in GNG in most animals, in CA and CC detected in some animals (at protein level). Prothoracicostatic peptide 7: Expressed in antennal lobe (AL), corpora cardiaca (CC), corpora allata (CA) and gnathal ganglion (GNG) (at protein level). Expression in AL, CA and CC detected in most animals, expression in GNG in some animals (at protein level). Prothoracicostatic peptide precursor-related peptide 2: Expressed in antennal lobe (AL), corpora cardiaca (CC) and corpora allata (CA) with expression detected in few animals (at protein level). Not expressed in gnathal ganglion (GNG) (at protein level). Prothoracicostatic peptide 8: Expressed in antennal lobe (AL), corpora cardiaca (CC), corpora allata (CA) and gnathal ganglion (GNG) (at protein level). Expression in AL detected in all animals, expression in GNG in most animals, in CA and CC detected in some animals (at protein level). Prothoracicostatic peptide precursor-related peptide 3: Expressed in antennal lobe (AL) in few animals (at protein level). Not expressed in corpora cardiaca (CC), corpora allata (CA) and gnathal ganglion (GNG) (at protein level).

It is found in the secreted. The polypeptide is Prothoracicostatic peptides (Agrotis ipsilon (Black cutworm moth)).